The primary structure comprises 505 residues: Lysine--tRNA ligase (505 aa).

Positions 415 and 422 each coordinate Mg(2+).

Belongs to the class-II aminoacyl-tRNA synthetase family. In terms of assembly, homodimer. Requires Mg(2+) as cofactor.

The protein resides in the cytoplasm. The enzyme catalyses tRNA(Lys) + L-lysine + ATP = L-lysyl-tRNA(Lys) + AMP + diphosphate. The protein is Lysine--tRNA ligase of Yersinia enterocolitica serotype O:8 / biotype 1B (strain NCTC 13174 / 8081).